A 426-amino-acid chain; its full sequence is tRNA(Ile)-lysidine synthase (426 aa).

19 to 24 (SGGLDS) provides a ligand contact to ATP.

Belongs to the tRNA(Ile)-lysidine synthase family.

It is found in the cytoplasm. It catalyses the reaction cytidine(34) in tRNA(Ile2) + L-lysine + ATP = lysidine(34) in tRNA(Ile2) + AMP + diphosphate + H(+). Its function is as follows. Ligates lysine onto the cytidine present at position 34 of the AUA codon-specific tRNA(Ile) that contains the anticodon CAU, in an ATP-dependent manner. Cytidine is converted to lysidine, thus changing the amino acid specificity of the tRNA from methionine to isoleucine. The sequence is that of tRNA(Ile)-lysidine synthase from Neisseria meningitidis serogroup A / serotype 4A (strain DSM 15465 / Z2491).